Here is a 1060-residue protein sequence, read N- to C-terminus: DNA-directed RNA polymerase subunit beta (1060 aa).

This sequence belongs to the RNA polymerase beta chain family. As to quaternary structure, in plastids the minimal PEP RNA polymerase catalytic core is composed of four subunits: alpha, beta, beta', and beta''. When a (nuclear-encoded) sigma factor is associated with the core the holoenzyme is formed, which can initiate transcription.

Its subcellular location is the plastid. It is found in the chloroplast. It carries out the reaction RNA(n) + a ribonucleoside 5'-triphosphate = RNA(n+1) + diphosphate. In terms of biological role, DNA-dependent RNA polymerase catalyzes the transcription of DNA into RNA using the four ribonucleoside triphosphates as substrates. The sequence is that of DNA-directed RNA polymerase subunit beta from Helianthus annuus (Common sunflower).